The sequence spans 205 residues: Thiamine-phosphate synthase (205 aa).

4-amino-2-methyl-5-(diphosphooxymethyl)pyrimidine-binding positions include 37–41 and Asn-69; that span reads QVREK. Mg(2+) contacts are provided by Asp-70 and Asp-89. Ser-108 contacts 4-amino-2-methyl-5-(diphosphooxymethyl)pyrimidine. 134-136 provides a ligand contact to 2-[(2R,5Z)-2-carboxy-4-methylthiazol-5(2H)-ylidene]ethyl phosphate; sequence TGS. Lys-137 is a 4-amino-2-methyl-5-(diphosphooxymethyl)pyrimidine binding site. Residues Gly-165 and 185–186 each bind 2-[(2R,5Z)-2-carboxy-4-methylthiazol-5(2H)-ylidene]ethyl phosphate; that span reads IS.

This sequence belongs to the thiamine-phosphate synthase family. Mg(2+) serves as cofactor.

The enzyme catalyses 2-[(2R,5Z)-2-carboxy-4-methylthiazol-5(2H)-ylidene]ethyl phosphate + 4-amino-2-methyl-5-(diphosphooxymethyl)pyrimidine + 2 H(+) = thiamine phosphate + CO2 + diphosphate. It carries out the reaction 2-(2-carboxy-4-methylthiazol-5-yl)ethyl phosphate + 4-amino-2-methyl-5-(diphosphooxymethyl)pyrimidine + 2 H(+) = thiamine phosphate + CO2 + diphosphate. It catalyses the reaction 4-methyl-5-(2-phosphooxyethyl)-thiazole + 4-amino-2-methyl-5-(diphosphooxymethyl)pyrimidine + H(+) = thiamine phosphate + diphosphate. It participates in cofactor biosynthesis; thiamine diphosphate biosynthesis; thiamine phosphate from 4-amino-2-methyl-5-diphosphomethylpyrimidine and 4-methyl-5-(2-phosphoethyl)-thiazole: step 1/1. Its function is as follows. Condenses 4-methyl-5-(beta-hydroxyethyl)thiazole monophosphate (THZ-P) and 2-methyl-4-amino-5-hydroxymethyl pyrimidine pyrophosphate (HMP-PP) to form thiamine monophosphate (TMP). In Clostridium botulinum (strain ATCC 19397 / Type A), this protein is Thiamine-phosphate synthase.